The sequence spans 293 residues: uncharacterized protein (293 aa).

2 disordered regions span residues 121-154 and 254-274; these read NLNF…SQNS and DILQ…PQQQ. Basic residues predominate over residues 133–149; sequence SYHHHSHSHSHHSHSHS. Over residues 260 to 272 the composition is skewed to pro residues; that stretch reads PPSPTPTPPPPPQ.

This is an uncharacterized protein from Dictyostelium discoideum (Social amoeba).